The following is a 365-amino-acid chain: Cyclin-O protein B (365 aa).

Positions 22–64 (SGKRKRDSVYSPGDATPGDRGEGEPKCPSVGTKKRAKYSRHRK) are disordered. Residues 53-64 (TKKRAKYSRHRK) are compositionally biased toward basic residues.

The protein belongs to the cyclin family.

The protein localises to the cytoplasm. Its function is as follows. Specifically required for generation of multiciliated cells, possibly by promoting a cell cycle state compatible with centriole amplification and maturation. Acts downstream of mcidas to promote mother centriole amplification and maturation in preparation for apical docking. The polypeptide is Cyclin-O protein B (ccno-b) (Xenopus laevis (African clawed frog)).